Here is a 440-residue protein sequence, read N- to C-terminus: Argininosuccinate lyase (440 aa).

It belongs to the lyase 1 family. Argininosuccinate lyase subfamily.

The protein localises to the cytoplasm. It carries out the reaction 2-(N(omega)-L-arginino)succinate = fumarate + L-arginine. Its pathway is amino-acid biosynthesis; L-arginine biosynthesis; L-arginine from L-ornithine and carbamoyl phosphate: step 3/3. The sequence is that of Argininosuccinate lyase from Clostridium botulinum (strain Okra / Type B1).